The primary structure comprises 701 residues: MEKRGQKRRQPTAHLSCELCRERKVKCDKLDPCTNCASAGVVCIPVRRPRLPRGAHVQRMRRISPEDPEASIQVDVPSSAGAGAGIAVVDDLKERIRRLESLVDSMRSPTSQISNLDQQSRDIIELTPNELDDDSSSTHNQATIHLGDGSLRVLGLSGPSGLDVGWTSIIKDKDISIQLCQVYLLNVDPVIKILHRPSVERWMLQGERYLGFSERHSAVDALGAAICYAAATSLTETQSWARFHATKSSIVSRARRACEAALEKSNLLVSPEVTTLQAFVLYLVARRSEDPSRAVWTLMAFAVRIAKALDLPGGADETFFSQQMRKRLWLTICLLDFQTSLSRPSEPLISVAEATSSFAPPKHINDSDFGPKSSHDISDREGLTDTTFSMVSYHVQAAGRLLNFESSSTDKEILQQHVQQFEQKTLRLLFYCDPESTPYAWFTWHRIQCFVTGARLSAIRPLRHQHRGSTGHLMPSLDTNGSASTLSLALNILEKVQLVHTDPRGEGFRWFVTVPWQPLAVAISECYVCQDKTLIQRALPIVEAAFQQHKAAVSGTSKAISTTLERLMCHVREKLSPTLCTSISLTASPAFEIANIPSTLSVPHTPPSRSSITSNGDLLSNWPWPAPDLPHNGPDIASATEAAPISTSLQKLDPLLLSLDSQLVIAGQEPLMENDQSWAAWEEVIAGLHDGETTRPNMFLS.

The zn(2)-C6 fungal-type DNA-binding region spans 17-43 (CELCRERKVKCDKLDPCTNCASAGVVC).

It localises to the nucleus. Its function is as follows. Transcription factor that specifically regulates the neosartoricin B biosynthesis gene cluster. This chain is C6 finger domain transcription factor nscR, found in Arthroderma gypseum (strain ATCC MYA-4604 / CBS 118893) (Microsporum gypseum).